The chain runs to 692 residues: Elongation factor G (692 aa).

Residues 8–282 (AKTRNIGIMA…AVIAYLPSPL (275 aa)) enclose the tr-type G domain. GTP-binding positions include 17-24 (AHVDAGKT), 81-85 (DTPGH), and 135-138 (NKMD).

This sequence belongs to the TRAFAC class translation factor GTPase superfamily. Classic translation factor GTPase family. EF-G/EF-2 subfamily.

It localises to the cytoplasm. Catalyzes the GTP-dependent ribosomal translocation step during translation elongation. During this step, the ribosome changes from the pre-translocational (PRE) to the post-translocational (POST) state as the newly formed A-site-bound peptidyl-tRNA and P-site-bound deacylated tRNA move to the P and E sites, respectively. Catalyzes the coordinated movement of the two tRNA molecules, the mRNA and conformational changes in the ribosome. The sequence is that of Elongation factor G from Streptococcus equi subsp. zooepidemicus (strain MGCS10565).